Consider the following 311-residue polypeptide: Reaction center protein L chain (311 aa).

3 consecutive transmembrane segments (helical) span residues 68-90, 123-151, and 156-178; these read FWGF…ETIL, GFAW…SMKL, and HVPI…RPIA. The (7R,8Z)-bacteriochlorophyll b site is built by His-183 and His-213. Residues 211–238 form a helical membrane-spanning segment; sequence PFHAIGITGLFASTWLLACHGSLILSAA. Residue His-230 participates in Fe cation binding. Phe-253 is an a ubiquinone binding site. A helical transmembrane segment spans residues 262–287; the sequence is GESGVHRLGYIFAIGGILSADLCILL. Fe cation is bound at residue His-267.

This sequence belongs to the reaction center PufL/M/PsbA/D family. As to quaternary structure, reaction center is composed of four bacteriochlorophylls, two bacteriopheophytins, two ubiquinones, one iron, and two highly hydrophobic polypeptide chains (designated L and M).

Its subcellular location is the cell membrane. The reaction center is a membrane-bound complex that mediates the initial photochemical event in the electron transfer process of photosynthesis. This chain is Reaction center protein L chain (pufL), found in Chloroflexus aurantiacus (strain ATCC 29366 / DSM 635 / J-10-fl).